The sequence spans 305 residues: Protoheme IX farnesyltransferase 2 (305 aa).

The next 8 membrane-spanning stretches (helical) occupy residues 38 to 58 (LITT…SFLG), 60 to 80 (INTV…SCAI), 115 to 135 (ILLV…AAVI), 157 to 177 (INTV…WTAV), 181 to 201 (IGVV…PHFL), 227 to 247 (VTKR…FFLG), 249 to 269 (LGLP…ILGL), and 285 to 305 (FVYS…LTLF).

It belongs to the UbiA prenyltransferase family. Protoheme IX farnesyltransferase subfamily. As to quaternary structure, interacts with CtaA.

It localises to the cell membrane. It catalyses the reaction heme b + (2E,6E)-farnesyl diphosphate + H2O = Fe(II)-heme o + diphosphate. The protein operates within porphyrin-containing compound metabolism; heme O biosynthesis; heme O from protoheme: step 1/1. Its function is as follows. Converts heme B (protoheme IX) to heme O by substitution of the vinyl group on carbon 2 of heme B porphyrin ring with a hydroxyethyl farnesyl side group. This Bacillus subtilis (strain 168) protein is Protoheme IX farnesyltransferase 2 (ctaB2).